Reading from the N-terminus, the 166-residue chain is V-type proton ATPase subunit c4 (166 aa).

Over 1 to 13 (MASSGFSGDETAP) the chain is Lumenal. Residues 14 to 34 (FFGFLGAAAALVFSCMGAAYG) traverse the membrane as a helical segment. Topologically, residues 35 to 56 (TAKSGVGVASMGVMRPELVMKS) are cytoplasmic. Residues 57–77 (IVPVVMAGVLGIYGLIIAVII) traverse the membrane as a helical segment. Residues 78-96 (STGINPKAKSYYLFDGYAH) are Lumenal-facing. Residues 97 to 118 (LSSGLACGLAGLSAGMAIGIVG) traverse the membrane as a helical segment. Residues 119 to 130 (DAGVRANAQQPK) lie on the Cytoplasmic side of the membrane. The helical transmembrane segment at 131–156 (LFVGMILILIFAEALALYGLIVGIIL) threads the bilayer. Topologically, residues 157 to 166 (SSRAGQSRAE) are lumenal.

The protein belongs to the V-ATPase proteolipid subunit family. V-ATPase is a heteromultimeric enzyme composed of a peripheral catalytic V1 complex (components A to H) attached to an integral membrane V0 proton pore complex (components: a, c, c'', d and e). The proteolipid components c and c'' are present as a hexameric ring that forms the proton-conducting pore. Interacts with APD2.

The protein localises to the vacuole membrane. In terms of biological role, proton-conducting pore forming subunit of the membrane integral V0 complex of vacuolar ATPase. V-ATPase is responsible for acidifying a variety of intracellular compartments in eukaryotic cells. This is V-type proton ATPase subunit c4 (VHA-c4) from Arabidopsis thaliana (Mouse-ear cress).